An 878-amino-acid polypeptide reads, in one-letter code: Aminopeptidase M1-C (878 aa).

The tract at residues 102 to 209 (LGEGVLAMDF…MSTYLVAIVV (108 aa)) is required for membrane association. Residues Glu142 and 275 to 279 (GAMEN) each bind substrate. A Zn(2+)-binding site is contributed by His311. Catalysis depends on Glu312, which acts as the Proton acceptor. Zn(2+)-binding residues include His315 and Glu334. Residues 726–727 (LL) carry the Dileucine internalization motif motif.

Belongs to the peptidase M1 family. As to quaternary structure, homodimer. It depends on Zn(2+) as a cofactor.

It is found in the membrane. Its subcellular location is the microsome membrane. The protein localises to the cytoplasm. The catalysed reaction is Release of an N-terminal amino acid, Xaa-|-Yaa- from a peptide, amide or arylamide. Xaa is preferably Ala, but may be most amino acids including Pro (slow action). When a terminal hydrophobic residue is followed by a prolyl residue, the two may be released as an intact Xaa-Pro dipeptide.. This Oryza sativa subsp. japonica (Rice) protein is Aminopeptidase M1-C.